Reading from the N-terminus, the 130-residue chain is Large ribosomal subunit protein bL20 (130 aa).

Belongs to the bacterial ribosomal protein bL20 family.

In terms of biological role, binds directly to 23S ribosomal RNA and is necessary for the in vitro assembly process of the 50S ribosomal subunit. It is not involved in the protein synthesizing functions of that subunit. The polypeptide is Large ribosomal subunit protein bL20 (Clavibacter michiganensis subsp. michiganensis (strain NCPPB 382)).